A 279-amino-acid chain; its full sequence is UPF0276 protein SO_2008 (279 aa).

The protein belongs to the UPF0276 family.

The chain is UPF0276 protein SO_2008 from Shewanella oneidensis (strain ATCC 700550 / JCM 31522 / CIP 106686 / LMG 19005 / NCIMB 14063 / MR-1).